A 248-amino-acid chain; its full sequence is Adenosylcobinamide-GDP ribazoletransferase (248 aa).

8 helical membrane-spanning segments follow: residues 24-44 (EVNL…IGAW), 47-67 (LVFT…AGLF), 70-90 (IIIT…GLFS), 106-126 (VGAN…ALFL), 134-154 (IGWL…LLFA), 165-185 (LGSI…LFVL), 186-206 (FILG…VILF), and 228-248 (AGGQ…WGLI).

This sequence belongs to the CobS family. The cofactor is Mg(2+).

Its subcellular location is the cell membrane. The enzyme catalyses alpha-ribazole + adenosylcob(III)inamide-GDP = adenosylcob(III)alamin + GMP + H(+). It catalyses the reaction alpha-ribazole 5'-phosphate + adenosylcob(III)inamide-GDP = adenosylcob(III)alamin 5'-phosphate + GMP + H(+). It participates in cofactor biosynthesis; adenosylcobalamin biosynthesis; adenosylcobalamin from cob(II)yrinate a,c-diamide: step 7/7. In terms of biological role, joins adenosylcobinamide-GDP and alpha-ribazole to generate adenosylcobalamin (Ado-cobalamin). Also synthesizes adenosylcobalamin 5'-phosphate from adenosylcobinamide-GDP and alpha-ribazole 5'-phosphate. In Listeria welshimeri serovar 6b (strain ATCC 35897 / DSM 20650 / CCUG 15529 / CIP 8149 / NCTC 11857 / SLCC 5334 / V8), this protein is Adenosylcobinamide-GDP ribazoletransferase.